Reading from the N-terminus, the 206-residue chain is Large ribosomal subunit protein eL13 (206 aa).

Over residues 184 to 193 (EKTNQKWDGK) the composition is skewed to basic and acidic residues. A disordered region spans residues 184 to 206 (EKTNQKWDGKRKAKAQAAAEPKA).

The protein belongs to the eukaryotic ribosomal protein eL13 family.

This chain is Large ribosomal subunit protein eL13 (RPL13), found in Tetrahymena thermophila (strain SB210).